A 349-amino-acid chain; its full sequence is Core protein VP7 (349 aa).

N287 carries N-linked (GlcNAc...) asparagine; by host glycosylation.

Belongs to the orbivirus VP7 family. Homotrimer that assemble in a complex of 260 capsomers on an inner scaffold composed of VP3.

Its subcellular location is the virion. Functionally, the VP7 protein is one of the five proteins (with VP1, VP3, VP4, and VP6) which form the inner capsid of the virus. The protein is Core protein VP7 (Segment-7) of Antilocapra americana (Pronghorn).